Here is a 526-residue protein sequence, read N- to C-terminus: MPASFLASLRAWIASSTIGQRILLALALGLLLITARVISKSKGTMPPGPRGLPLLGNIFQLPKLPWYRFTEWKEEFGPIFSLNFAGTPVVVLNSHEVVGDLLERKSTIYSDRPRFIMAGEILTGGMLIVFTGYGKVWRKLRRAGQEGLNVRASEKYQPLQESEARLLTTNMLREPAEWDAHLQRAAASSIASAVYAWPPLTKSDDGLVHRIDELMRRLVMAGLPGRYLVEIFPIMKHLPTWMAKWKREGLEWHRRDTEMFEGFYDNVARFMASGKYKPSLTAGLIERQEKNGLSKKEVSWLAGTMIGAGAETTAASLSVFMLAMTLYPDVMRKAQAEIDALVGRERMPTFADRPHLPYVCALVKEVLRWRPVGPVGVPRRTSEDDWYKGYFIPKGTLVIANVWAMNRDPAIYPDYDEFRPDRFLDASGNEIDIAGTHGQGHVTYGFGRRICIGMHVANQALFIDIAALLWAFNIEAPTGPDGTPILPSRTDFVDEGLVFRPAAFRCKVTPRIDDVATMLATLEKNA.

Helical transmembrane passes span 13-33 (IASS…LLLI), 115-135 (FIMA…GYGK), and 306-326 (IGAG…AMTL). Position 451 (Cys451) interacts with heme.

The protein belongs to the cytochrome P450 family. The cofactor is heme.

It is found in the membrane. Its pathway is secondary metabolite biosynthesis. Cytochrome P450 monooxygenase that is able to use delta(6)-protoilludene as a substrate to produce delta(6)-protoilludene-8-ol. The sequence is that of Cytochrome P450 monooxygenase 253 from Postia placenta (strain ATCC 44394 / Madison 698-R) (Brown rot fungus).